The sequence spans 211 residues: Nucleoside triphosphate pyrophosphatase (211 aa).

The active-site Proton acceptor is the Asp75.

Belongs to the Maf family. A divalent metal cation serves as cofactor.

Its subcellular location is the cytoplasm. It catalyses the reaction a ribonucleoside 5'-triphosphate + H2O = a ribonucleoside 5'-phosphate + diphosphate + H(+). It carries out the reaction a 2'-deoxyribonucleoside 5'-triphosphate + H2O = a 2'-deoxyribonucleoside 5'-phosphate + diphosphate + H(+). Its function is as follows. Nucleoside triphosphate pyrophosphatase. May have a dual role in cell division arrest and in preventing the incorporation of modified nucleotides into cellular nucleic acids. This Prochlorococcus marinus (strain NATL1A) protein is Nucleoside triphosphate pyrophosphatase.